The sequence spans 352 residues: Cobalt transport protein NhlF (352 aa).

A run of 8 helical transmembrane segments spans residues 23–43 (LASVVGAIVILHVLGVALYLG), 46–66 (GNPAAAGGLAGSGVLAYVLGV), 95–115 (VGFFFAMGHSTVVVVLALVVA), 131–151 (EIGGLVATVVAVTFLSIVAGL), 206–226 (PVGLLMGLGLETASEVTLLTL), 230–250 (AATGGTLSIAAVLSLPLLFAA), 290–310 (VIGLFVAGIYVCALLAHLPMF), and 323–343 (FEFLGYAVAAAFILTWTGALL).

This sequence belongs to the NiCoT transporter (TC 2.A.52) family.

The protein resides in the cell membrane. Cobalt uptake is inhibited by uncouplers (CCCP and 3,5-di-tert-butyl-4-hydroxybenzylidenemalononitrile) and by the addition of excess nickel. Mediates energy-dependent uptake of cobalt ions into the cell. Can also transport nickel ions, but cobalt is the preferred substrate. The protein is Cobalt transport protein NhlF (nhlF) of Rhodococcus rhodochrous.